Reading from the N-terminus, the 927-residue chain is Transmembrane protein 132 homolog (927 aa).

Residues methionine 1–serine 18 form the signal peptide. Residues phenylalanine 749–valine 769 traverse the membrane as a helical segment. Residues leucine 789–threonine 842 are disordered. Over residues threonine 817 to threonine 842 the composition is skewed to polar residues.

The protein belongs to the TMEM132 family. As to quaternary structure, interacts with gex-3. In terms of tissue distribution, specifically expressed in neurons.

It localises to the membrane. Functionally, regulates neuronal morphology via inhibition of the WAVE regulatory complex (WCR), a complex that controls F-actin cytoskeletal dynamics. In Caenorhabditis elegans, this protein is Transmembrane protein 132 homolog.